The primary structure comprises 1484 residues: Ral GTPase-activating protein subunit beta (1484 aa).

Disordered regions lie at residues 355–437 (PRSD…APRR) and 697–728 (GGEN…PDSE). The residue at position 359 (Ser359) is a Phosphoserine. Phosphothreonine is present on residues Thr363 and Thr379. 3 stretches are compositionally biased toward polar residues: residues 369 to 381 (SMPQ…TTPP), 392 to 428 (NKAT…TSSE), and 701 to 725 (NLKS…PTTP). Phosphoserine is present on residues Ser421 and Ser710. Residue Thr724 is modified to Phosphothreonine. Residues 1138 to 1382 (IGYLDLLPCR…TTLEKEVPVI (245 aa)) enclose the Rap-GAP domain. The residue at position 1275 (Ser1275) is a Phosphoserine. The interval 1301 to 1325 (DSLNSSQRLSPSSRMKKLPQGRPVP) is disordered. Residues 1302–1313 (SLNSSQRLSPSS) are compositionally biased toward low complexity.

As to quaternary structure, component of the heterodimeric RalGAP1 complex with RALGAPA1 and of the heterodimeric RalGAP2 complex with RALGAPA2. Heterodimerization is required for activity. Detected in brain, thymus, lung, heart, spleen, liver and testis (at protein level).

In terms of biological role, non-catalytic subunit of the heterodimeric RalGAP1 and RalGAP2 complexes which act as GTPase activators for the Ras-like small GTPases RALA and RALB. The chain is Ral GTPase-activating protein subunit beta from Rattus norvegicus (Rat).